Reading from the N-terminus, the 20-residue chain is Serum amyloid P-component (20 aa).

Residues 1 to 20 form the Pentraxin (PTX) domain; it reads ZPIDLMGKVFVFDKELSPBI.

This sequence belongs to the pentraxin family. In terms of assembly, homopentamer. Pentraxin (or pentaxin) have a discoid arrangement of 5 non-covalently bound subunits.

The protein resides in the secreted. The polypeptide is Serum amyloid P-component (Pleuronectes platessa (European plaice)).